We begin with the raw amino-acid sequence, 223 residues long: Ribose-5-phosphate isomerase A (223 aa).

Residues 32-35 (TGST), 85-88 (DGAD), and 98-101 (KGGG) each bind substrate. The Proton acceptor role is filled by Glu107. Lys125 contacts substrate.

This sequence belongs to the ribose 5-phosphate isomerase family. In terms of assembly, homodimer.

The catalysed reaction is aldehydo-D-ribose 5-phosphate = D-ribulose 5-phosphate. It participates in carbohydrate degradation; pentose phosphate pathway; D-ribose 5-phosphate from D-ribulose 5-phosphate (non-oxidative stage): step 1/1. Its function is as follows. Catalyzes the reversible conversion of ribose-5-phosphate to ribulose 5-phosphate. The polypeptide is Ribose-5-phosphate isomerase A (Pseudomonas paraeruginosa (strain DSM 24068 / PA7) (Pseudomonas aeruginosa (strain PA7))).